Consider the following 350-residue polypeptide: sn-1 oleoyl-lipid 12-desaturase (350 aa).

A run of 2 helical transmembrane segments spans residues 41–61 (AWTQALLSVVMVGLGYWSLAI) and 64–84 (WFLLPIAWIFTGTALTGFFVI). Residues 86–90 (HDCGH) carry the Histidine box-1 motif. A helical transmembrane segment spans residues 98–118 (WVNDLVGHIFMMPLIYPFHSW). The Histidine box-2 motif lies at 122-126 (HNHHH). A run of 2 helical transmembrane segments spans residues 196 to 216 (VAVVVLFAAVAFPTLIATTGI) and 219 to 239 (FVKFWFVPWLGYHFWMSTFTI). The Histidine box-3 motif lies at 287–291 (HHLST).

This sequence belongs to the fatty acid desaturase type 2 family. Requires Fe(2+) as cofactor.

It is found in the membrane. It carries out the reaction a 1-[(9Z)-octadecenoyl]-2-acyl-glycerolipid + 2 reduced [2Fe-2S]-[ferredoxin] + O2 + 2 H(+) = a 1-[(9Z,12Z)-octadecdienoyl]-2-acyl-glycerolipid + 2 oxidized [2Fe-2S]-[ferredoxin] + 2 H2O. It functions in the pathway lipid metabolism; polyunsaturated fatty acid biosynthesis. In terms of biological role, desaturase involved in fatty acid biosynthesis. Introduces a double bond at carbon 12 of oleoyl groups (18:1) attached to the sn-1 position of the glycerol moiety of membrane glycerolipids. This Anabaena variabilis protein is sn-1 oleoyl-lipid 12-desaturase.